The following is a 158-amino-acid chain: Small ribosomal subunit protein uS15 (158 aa).

A compositionally biased stretch (basic residues) spans 1–18 (MARMHARKRGKSGSKRPP). The segment at 1 to 21 (MARMHARKRGKSGSKRPPRTA) is disordered.

This sequence belongs to the universal ribosomal protein uS15 family. Part of the 30S ribosomal subunit.

This is Small ribosomal subunit protein uS15 from Pyrococcus abyssi (strain GE5 / Orsay).